The chain runs to 88 residues: Small ribosomal subunit protein bS20 (88 aa).

The tract at residues Met1–Leu28 is disordered.

It belongs to the bacterial ribosomal protein bS20 family.

In terms of biological role, binds directly to 16S ribosomal RNA. This is Small ribosomal subunit protein bS20 from Streptomyces avermitilis (strain ATCC 31267 / DSM 46492 / JCM 5070 / NBRC 14893 / NCIMB 12804 / NRRL 8165 / MA-4680).